The primary structure comprises 132 residues: Small ribosomal subunit protein uS8 (132 aa).

It belongs to the universal ribosomal protein uS8 family. Part of the 30S ribosomal subunit. Contacts proteins S5 and S12.

In terms of biological role, one of the primary rRNA binding proteins, it binds directly to 16S rRNA central domain where it helps coordinate assembly of the platform of the 30S subunit. This Mycolicibacterium vanbaalenii (strain DSM 7251 / JCM 13017 / BCRC 16820 / KCTC 9966 / NRRL B-24157 / PYR-1) (Mycobacterium vanbaalenii) protein is Small ribosomal subunit protein uS8.